We begin with the raw amino-acid sequence, 137 residues long: Large ribosomal subunit protein uL16 (137 aa).

Belongs to the universal ribosomal protein uL16 family. Part of the 50S ribosomal subunit.

Functionally, binds 23S rRNA and is also seen to make contacts with the A and possibly P site tRNAs. The protein is Large ribosomal subunit protein uL16 of Aromatoleum aromaticum (strain DSM 19018 / LMG 30748 / EbN1) (Azoarcus sp. (strain EbN1)).